A 338-amino-acid chain; its full sequence is 1-aminocyclopropane-1-carboxylate deaminase (338 aa).

The residue at position 51 (K51) is an N6-(pyridoxal phosphate)lysine. S78 serves as the catalytic Nucleophile.

This sequence belongs to the ACC deaminase/D-cysteine desulfhydrase family. In terms of assembly, homotrimer. Requires pyridoxal 5'-phosphate as cofactor.

It catalyses the reaction 1-aminocyclopropane-1-carboxylate + H2O = 2-oxobutanoate + NH4(+). In terms of biological role, catalyzes a cyclopropane ring-opening reaction, the irreversible conversion of 1-aminocyclopropane-1-carboxylate (ACC) to ammonia and alpha-ketobutyrate. Allows growth on ACC as a nitrogen source. The polypeptide is 1-aminocyclopropane-1-carboxylate deaminase (Pseudomonas sp. (strain ACP)).